A 22-amino-acid polypeptide reads, in one-letter code: Defensin D1 (22 aa).

This sequence belongs to the DEFL family. Group II subfamily.

Antimicrobial peptide. Active against Gram-positive and Gram-negative bacterial pathogens. In Spinacia oleracea (Spinach), this protein is Defensin D1.